The sequence spans 91 residues: DNA-directed RNA polymerase subunit omega (91 aa).

The protein belongs to the RNA polymerase subunit omega family. In terms of assembly, the RNAP catalytic core consists of 2 alpha, 1 beta, 1 beta' and 1 omega subunit. When a sigma factor is associated with the core the holoenzyme is formed, which can initiate transcription. The rRNA transcription and antitermination complex (rrnTAC) consists of RNAP, NusA, NusB, NusE (rpsJ), NusG, SubB, ribosomal protein S4, DNA and precursor rRNA; S4 is more flexible than other subunits.

The enzyme catalyses RNA(n) + a ribonucleoside 5'-triphosphate = RNA(n+1) + diphosphate. Its function is as follows. Promotes RNA polymerase (RNAP) assembly. Latches the N- and C-terminal regions of the beta' subunit thereby facilitating its interaction with the beta and alpha subunits. Functionally, part of the processive rRNA transcription and antitermination complex (rrnTAC). The complex forms an RNA-chaperone ring around the RNA exit tunnel of RNAP. It supports rapid transcription and antitermination of rRNA operons, cotranscriptional rRNA folding, and annealing of distal rRNA regions to allow correct ribosome biogenesis. The sequence is that of DNA-directed RNA polymerase subunit omega (rpoZ) from Escherichia coli (strain K12).